The chain runs to 613 residues: Probable LRR receptor-like serine/threonine-protein kinase At5g10290 (613 aa).

The first 31 residues, 1–31 (MRMFSLQKMAMAFTLLFFACLCSFVSPDAQG), serve as a signal peptide directing secretion. Topologically, residues 32–225 (DALFALRISL…SGDSSKPKTG (194 aa)) are extracellular. Residues N81 and N116 are each glycosylated (N-linked (GlcNAc...) asparagine). LRR repeat units follow at residues 95–117 (NLKT…FGNL), 119–141 (SLTS…IGNL), 143–166 (KLQF…TGLP), and 167–189 (NLLN…LFEI). Residue N155 is glycosylated (N-linked (GlcNAc...) asparagine). N193 is a glycosylation site (N-linked (GlcNAc...) asparagine). The helical transmembrane segment at 226-246 (IIAGVVAGVTVVLFGILLFLF) threads the bilayer. At 247 to 613 (CKDRHKGYRR…QDAIELSGGR (367 aa)) the chain is on the cytoplasmic side. T287 carries the phosphothreonine modification. The 280-residue stretch at 290-569 (FSEKNVLGQG…VVRMLEGEGL (280 aa)) folds into the Protein kinase domain. ATP is bound at residue 296 to 304 (LGQGGFGKV). Position 313 is a phosphothreonine (T313). K318 is a binding site for ATP. Residue S371 is modified to Phosphoserine. Phosphothreonine is present on T390. D417 (proton acceptor) is an active-site residue. T450, T451, and T456 each carry phosphothreonine. Position 464 is a phosphotyrosine (Y464). Residue S466 is modified to Phosphoserine. T467 bears the Phosphothreonine mark. The residue at position 471 (S471) is a Phosphoserine. T547 bears the Phosphothreonine mark.

This sequence belongs to the protein kinase superfamily. Ser/Thr protein kinase family.

The protein localises to the cell membrane. The catalysed reaction is L-seryl-[protein] + ATP = O-phospho-L-seryl-[protein] + ADP + H(+). It catalyses the reaction L-threonyl-[protein] + ATP = O-phospho-L-threonyl-[protein] + ADP + H(+). This Arabidopsis thaliana (Mouse-ear cress) protein is Probable LRR receptor-like serine/threonine-protein kinase At5g10290.